A 201-amino-acid polypeptide reads, in one-letter code: Peptidyl-tRNA hydrolase (201 aa).

TRNA is bound at residue Y17. The active-site Proton acceptor is H22. The tRNA site is built by Y68, N70, and N116.

This sequence belongs to the PTH family. As to quaternary structure, monomer.

The protein localises to the cytoplasm. It carries out the reaction an N-acyl-L-alpha-aminoacyl-tRNA + H2O = an N-acyl-L-amino acid + a tRNA + H(+). Functionally, hydrolyzes ribosome-free peptidyl-tRNAs (with 1 or more amino acids incorporated), which drop off the ribosome during protein synthesis, or as a result of ribosome stalling. Its function is as follows. Catalyzes the release of premature peptidyl moieties from peptidyl-tRNA molecules trapped in stalled 50S ribosomal subunits, and thus maintains levels of free tRNAs and 50S ribosomes. The polypeptide is Peptidyl-tRNA hydrolase (Lawsonia intracellularis (strain PHE/MN1-00)).